A 218-amino-acid polypeptide reads, in one-letter code: 3-dehydroquinate dehydratase (218 aa).

3-dehydroquinate is bound by residues 29 to 31 (EFR) and Arg-56. The Proton donor/acceptor role is filled by His-116. Catalysis depends on Lys-142, which acts as the Schiff-base intermediate with substrate. Residues Arg-180, Ser-200, and Gln-204 each contribute to the 3-dehydroquinate site.

This sequence belongs to the type-I 3-dehydroquinase family. Homodimer.

It catalyses the reaction 3-dehydroquinate = 3-dehydroshikimate + H2O. It participates in metabolic intermediate biosynthesis; chorismate biosynthesis; chorismate from D-erythrose 4-phosphate and phosphoenolpyruvate: step 3/7. In terms of biological role, involved in the third step of the chorismate pathway, which leads to the biosynthesis of aromatic amino acids. Catalyzes the cis-dehydration of 3-dehydroquinate (DHQ) and introduces the first double bond of the aromatic ring to yield 3-dehydroshikimate. The sequence is that of 3-dehydroquinate dehydratase from Methanococcus maripaludis (strain DSM 14266 / JCM 13030 / NBRC 101832 / S2 / LL).